Consider the following 259-residue polypeptide: Malonyl-[acyl-carrier protein] O-methyltransferase 2 (259 aa).

The protein belongs to the methyltransferase superfamily.

It catalyses the reaction malonyl-[ACP] + S-adenosyl-L-methionine = malonyl-[ACP] methyl ester + S-adenosyl-L-homocysteine. It functions in the pathway cofactor biosynthesis; biotin biosynthesis. Functionally, converts the free carboxyl group of a malonyl-thioester to its methyl ester by transfer of a methyl group from S-adenosyl-L-methionine (SAM). It allows to synthesize pimeloyl-ACP via the fatty acid synthetic pathway. The polypeptide is Malonyl-[acyl-carrier protein] O-methyltransferase 2 (Ilyobacter polytropus (strain ATCC 51220 / DSM 2926 / LMG 16218 / CuHBu1)).